The primary structure comprises 34 residues: Trypsin inhibitor 1 (34 aa).

Positions 1–34 (SGSDGGVCPKILQRCRRDSDCPGACICRGNGYCG) form a cross-link, cyclopeptide (Ser-Gly). Disulfide bonds link Cys8-Cys25, Cys15-Cys27, and Cys21-Cys33.

This is a cyclic peptide.

The protein resides in the secreted. Functionally, inhibits trypsin; probably participates in a plant defense mechanism. This chain is Trypsin inhibitor 1, found in Momordica cochinchinensis (Spiny bitter cucumber).